Consider the following 279-residue polypeptide: Zinc-finger homeodomain protein 1 (279 aa).

The span at 1–30 shows a compositional bias: acidic residues; the sequence is MEFEDNNNNNDEEQEEDMNLHEEEEDDDAV. Residues 1-62 form a disordered region; that stretch reads MEFEDNNNNN…TTSTGGGGGF (62 aa). The segment at 75-124 adopts a ZF-HD dimerization-type zinc-finger fold; it reads FRECLKNQAVNIGGHAVDGCGEFMPAGIEGTIDALKCAACGCHRNFHRKE. Disordered stretches follow at residues 128 to 199 and 245 to 279; these read FHHA…TKFT and NNKHTLGKSPSPLHHHQAPPPPPPQSSFHHEQDQP. A compositionally biased stretch (pro residues) spans 134-143; the sequence is QHQPPPPPPG. A DNA-binding region (homeobox; atypical) is located at residues 191 to 254; sequence RKRHRTKFTA…NNKHTLGKSP (64 aa).

As to quaternary structure, homo- and heterodimer with other ZFHD proteins. Interacts with MIF1 and MIF2; these interactions prevent nuclear localization and DNA-binding to inhibit transcription regulation activity. Binds to ZHD2, ZHD3, ZHD4, ZHD5, ZHD6, ZHD7, ZHD8, ZHD9, ZHD10 and ZHD11. In terms of tissue distribution, mostly expressed in flowers and inflorescence.

It localises to the nucleus. Functionally, putative transcription factor. This Arabidopsis thaliana (Mouse-ear cress) protein is Zinc-finger homeodomain protein 1 (ZHD1).